The primary structure comprises 94 residues: Putative regulatory protein Sfum_3631 (94 aa).

The protein belongs to the RemA family.

In Syntrophobacter fumaroxidans (strain DSM 10017 / MPOB), this protein is Putative regulatory protein Sfum_3631.